The primary structure comprises 249 residues: tRNA (guanine-N(1)-)-methyltransferase (249 aa).

S-adenosyl-L-methionine is bound by residues G116 and 136-141 (IGDYIL).

This sequence belongs to the RNA methyltransferase TrmD family. In terms of assembly, homodimer.

It is found in the cytoplasm. It carries out the reaction guanosine(37) in tRNA + S-adenosyl-L-methionine = N(1)-methylguanosine(37) in tRNA + S-adenosyl-L-homocysteine + H(+). Functionally, specifically methylates guanosine-37 in various tRNAs. The protein is tRNA (guanine-N(1)-)-methyltransferase of Zymomonas mobilis subsp. mobilis (strain ATCC 31821 / ZM4 / CP4).